The primary structure comprises 429 residues: MPKRKAAGDASQEPKRRSARLSAMPVPFTPELKPKRASTSRKTKTTNVVEESKDAGATTIPETKPEVVKGECNMENAENGEAKIIEAPISKMETEEVKEQINEDTEGDGGEKKEAVVTKGKNDELEANIQDVEKDEDEKEHEDTGEEGEDGEREGGLKEKPDVAEIEDAKEAKDDEEKEDKEKEDDKGGDGKKEEEKDDEGEAETEEEVKEQQKEETEGDDGKCKVEENKEGRKESQHEEEGKEELHEEDGKEDLHEEDGKEDLHEEDGKEDLHEEEGKEDLHEEEGKEDLHEEEGKEDLHEEEGKEDLHEEEGKEDLHEEEGKEDLHEEEGKEDLHEEDGKEGQHEEEGKEDLHEEEGKEDLHEEDGKEGQHEEDGKKKADGNEDRKEEEEQEAATEGNDENKVEVEEEADNKDFKEDGEKGEPVSTV.

Residues 1–429 (MPKRKAAGDA…GEKGEPVSTV (429 aa)) form a disordered region. T29 carries the post-translational modification Phosphothreonine. Residues 35–44 (KRASTSRKTK) are compositionally biased toward basic residues. K64 is covalently cross-linked (Glycyl lysine isopeptide (Lys-Gly) (interchain with G-Cter in SUMO2)). At S90 the chain carries Phosphoserine. 2 stretches are compositionally biased toward basic and acidic residues: residues 92 to 101 (METEEVKEQI) and 109 to 124 (GGEK…KNDE). Residue K98 forms a Glycyl lysine isopeptide (Lys-Gly) (interchain with G-Cter in SUMO1); alternate linkage. A Glycyl lysine isopeptide (Lys-Gly) (interchain with G-Cter in SUMO2); alternate cross-link involves residue K98. K121 participates in a covalent cross-link: Glycyl lysine isopeptide (Lys-Gly) (interchain with G-Cter in SUMO2). Positions 133–152 (EKDEDEKEHEDTGEEGEDGE) are enriched in acidic residues. Basic and acidic residues predominate over residues 153–195 (REGGLKEKPDVAEIEDAKEAKDDEEKEDKEKEDDKGGDGKKEE). The segment covering 196-209 (EKDDEGEAETEEEV) has biased composition (acidic residues). Basic and acidic residues-rich tracts occupy residues 210–387 (KEQQ…NEDR) and 413–429 (NKDF…VSTV).

It belongs to the HMGN family. As to expression, expressed in trophoblast giant cells.

The protein resides in the nucleus. In terms of biological role, preferentially binds to euchromatin and modulates cellular transcription by counteracting linker histone-mediated chromatin compaction. This chain is High mobility group nucleosome-binding domain-containing protein 5, found in Rattus norvegicus (Rat).